The sequence spans 411 residues: Serine hydroxymethyltransferase (411 aa).

Residues leucine 119 and 123–125 (GHL) contribute to the (6S)-5,6,7,8-tetrahydrofolate site. At lysine 228 the chain carries N6-(pyridoxal phosphate)lysine. 351 to 353 (SPF) lines the (6S)-5,6,7,8-tetrahydrofolate pocket.

Belongs to the SHMT family. Homodimer. Pyridoxal 5'-phosphate is required as a cofactor.

The protein resides in the cytoplasm. It carries out the reaction (6R)-5,10-methylene-5,6,7,8-tetrahydrofolate + glycine + H2O = (6S)-5,6,7,8-tetrahydrofolate + L-serine. The protein operates within one-carbon metabolism; tetrahydrofolate interconversion. Its pathway is amino-acid biosynthesis; glycine biosynthesis; glycine from L-serine: step 1/1. Catalyzes the reversible interconversion of serine and glycine with tetrahydrofolate (THF) serving as the one-carbon carrier. This reaction serves as the major source of one-carbon groups required for the biosynthesis of purines, thymidylate, methionine, and other important biomolecules. Also exhibits THF-independent aldolase activity toward beta-hydroxyamino acids, producing glycine and aldehydes, via a retro-aldol mechanism. This Clostridium beijerinckii (strain ATCC 51743 / NCIMB 8052) (Clostridium acetobutylicum) protein is Serine hydroxymethyltransferase.